Consider the following 449-residue polypeptide: Heterogeneous nuclear ribonucleoprotein H2 (449 aa).

M1 is subject to N-acetylmethionine. M2 bears the N-acetylmethionine; in Heterogeneous nuclear ribonucleoprotein H2, N-terminally processed mark. The RRM 1 domain maps to 11 to 90 (FVVKVRGLPW…RYVEVFKSNS (80 aa)). S23 bears the Phosphoserine mark. K35 is covalently cross-linked (Glycyl lysine isopeptide (Lys-Gly) (interchain with G-Cter in SUMO2)). Phosphoserine occurs at positions 54 and 63. A Glycyl lysine isopeptide (Lys-Gly) (interchain with G-Cter in SUMO2) cross-link involves residue K87. S90 carries the post-translational modification Phosphoserine. A Glycyl lysine isopeptide (Lys-Gly) (interchain with G-Cter in SUMO2) cross-link involves residue K98. Residues 111 to 188 (GFVRLRGLPF…RYIEIFKSSR (78 aa)) enclose the RRM 2 domain. R233 is modified (dimethylated arginine; alternate). The residue at position 233 (R233) is an Omega-N-methylarginine; alternate. The stretch at 234–249 (GAYGGGYGGYDDYGGY) is one 1-1 repeat. The segment at 234 to 433 (GAYGGGYGGY…YGGQSSMSGY (200 aa)) is 2 X 16 AA Gly-rich approximate repeats. Residue Y246 is modified to Phosphotyrosine. The RRM 3 domain occupies 289-364 (HCVHMRGLPY…RYVELFLNST (76 aa)). S310 is subject to Phosphoserine. Tandem repeats lie at residues 354 to 372 (HRYVELFLNSTAGTSGGAY), 374 to 392 (HSYVELFLNSTAGASGGAY), and 418 to 433 (AGYGGGYGGQSSMSGY). The 2 X 19 AA perfect repeats stretch occupies residues 354–392 (HRYVELFLNSTAGTSGGAYDHSYVELFLNSTAGASGGAY).

Component of a ribonucleoprotein complex containing mRNAs and RNA-binding proteins including DDX5, HNRNPH2 and SRSF1 as well as splicing regulator ARVCF. Interacts with TXNL4/DIM1.

It is found in the nucleus. The protein localises to the nucleoplasm. Its function is as follows. This protein is a component of the heterogeneous nuclear ribonucleoprotein (hnRNP) complexes which provide the substrate for the processing events that pre-mRNAs undergo before becoming functional, translatable mRNAs in the cytoplasm. Binds poly(RG). This chain is Heterogeneous nuclear ribonucleoprotein H2 (Hnrnph2), found in Rattus norvegicus (Rat).